The chain runs to 91 residues: Sec-independent protein translocase protein TatA (91 aa).

The chain crosses the membrane as a helical span at residues Ala-2–Trp-22. Residues Val-43–Lys-55 are compositionally biased toward basic and acidic residues. The interval Val-43–Ala-91 is disordered. Residues Ser-57–Val-81 are compositionally biased toward polar residues. Residues Glu-82 to Ala-91 show a composition bias toward basic and acidic residues.

It belongs to the TatA/E family. As to quaternary structure, the Tat system comprises two distinct complexes: a TatABC complex, containing multiple copies of TatA, TatB and TatC subunits, and a separate TatA complex, containing only TatA subunits. Substrates initially bind to the TatABC complex, which probably triggers association of the separate TatA complex to form the active translocon.

Its subcellular location is the cell membrane. In terms of biological role, part of the twin-arginine translocation (Tat) system that transports large folded proteins containing a characteristic twin-arginine motif in their signal peptide across membranes. TatA could form the protein-conducting channel of the Tat system. The chain is Sec-independent protein translocase protein TatA from Corynebacterium kroppenstedtii (strain DSM 44385 / JCM 11950 / CIP 105744 / CCUG 35717).